The chain runs to 54 residues: Protein hunchback (54 aa).

C2H2-type zinc fingers lie at residues 1–3 (RKH), 9–31 (FQCDKCSYSCVNKSMLNSHRKFH), and 37–54 (YRCADCDYATKYCHSFKL).

The protein belongs to the hunchback C2H2-type zinc-finger protein family.

It localises to the nucleus. Gap class segmentation protein that controls development of head structures. The protein is Protein hunchback (hb) of Calliphora vicina (Blue blowfly).